Here is a 457-residue protein sequence, read N- to C-terminus: Putative zinc finger CCCH domain-containing protein 21 (457 aa).

Disordered stretches follow at residues 51–73 (PTSS…ARAS), 102–130 (LESP…EKLL), 195–221 (TSPS…ERER), and 280–329 (RKQA…RLRV). Gly residues predominate over residues 57–66 (DGGGGGGGGY). The stretch at 215–276 (ASAEREREVR…HLSLLLEELE (62 aa)) forms a coiled coil. 2 C3H1-type zinc fingers span residues 382-409 (AAKT…HGLQ) and 419-447 (RYKT…HSPL).

The sequence is that of Putative zinc finger CCCH domain-containing protein 21 from Oryza sativa subsp. japonica (Rice).